Reading from the N-terminus, the 649-residue chain is Flavin-dependent oxygenase ucdD (649 aa).

Positions 92, 185, 344, 370, and 386 each coordinate FAD.

Belongs to the PheA/TfdB FAD monooxygenase family. As to quaternary structure, homodimer. The cofactor is FAD.

It functions in the pathway secondary metabolite biosynthesis. Nonribosomal peptide synthetase that mediates the biosynthesis of usterphenyllins and uscandidusins, p-terphenyl derivatives. Within the pathway, ucdD catalyzes the formation of 3,15-dihydroxyterphenyllin via dihydroxylation at C-3 of ring A and C-15 of ring C of the terphenyllin intermediate. The pathway begin with the biosynthesis of 4-hydroxyphenylpyruvate (HPPA) from L-tyrosine, possibly by the aminotransferase ucdG. The nonribosomal peptide synthetase ucdA then condenses two HPPA units to produce atromentin. The key step in this pathway is the reduction and dehydration of atromentin to form a terphenyl triol intermediate, performed by the NAD-dependent dehydrogenase ucdB. Further O-methylation by the methyltransferase ucdC forms terphenyllin carrying two methoxy moieties at C-9 and C-12, and subsequent dihydroxylation at C-3 of ring A and C-15 of ring C by the flavin-dependent oxygenase ucdD leads to 3,15-dihydroxyterphenyllin. Prenylation by ucdE at position C-5 of ring A forms usterphenyllin B, and is followed by a second prenylation at position C-14 of ring C to form usterphenyllin A. The following furan ring formation that leads to uscandidusins A and B was proven to be an unexpected spontaneous non-enzymatic reaction. This is Flavin-dependent oxygenase ucdD from Aspergillus ustus.